The chain runs to 311 residues: uncharacterized protein (311 aa).

10 helical membrane passes run 6-26, 33-53, 70-90, 97-117, 123-143, 155-175, 185-205, 219-239, 244-264, and 265-285; these read IFIL…KMLA, PFQV…PMAV, YLAL…QFAV, TAAV…YFIL, GITI…FNPA, LIGI…TVIS, YVFN…LLVV, ILVL…CYLG, TSAV…TVLA, and ILIL…FIII. 2 consecutive EamA domains span residues 12 to 141 and 166 to 292; these read AIFY…IIFN and VVWS…INYS.

This sequence belongs to the EamA transporter family.

The protein resides in the cell membrane. This is an uncharacterized protein from Clostridium kluyveri (strain ATCC 8527 / DSM 555 / NBRC 12016 / NCIMB 10680 / K1).